Reading from the N-terminus, the 554-residue chain is HMG box-containing protein 4 (554 aa).

2 disordered regions span residues 15–368 (GTED…AYQV) and 417–469 (HKQN…PAKV). The span at 75–88 (SSDDYHADHSTDSA) shows a compositional bias: basic and acidic residues. Residues 95 to 105 (SLPSPSSSDTA) are compositionally biased toward low complexity. Over residues 113–123 (TSPQADTSTTH) the composition is skewed to polar residues. 2 stretches are compositionally biased toward basic and acidic residues: residues 145–154 (PHKDYHKKSG) and 217–226 (LGREEIESRS). Positions 236–251 (YTPRSGGTPDSASSTG) are enriched in polar residues. Positions 268-296 (MKKKKKSKKSKKKKDKHKDEKHKKHSKSK) are enriched in basic residues. Positions 313 to 332 (LPSPPPPPATTPPTSPPSIP) are enriched in pro residues. The segment covering 341–357 (HTEEQSDKKKKKEDPEK) has biased composition (basic and acidic residues). Positions 359 to 427 (KKKNMSAYQV…KQNKAEATTV (69 aa)) form a DNA-binding region, HMG box. 2 stretches are compositionally biased toward low complexity: residues 433-445 (SSES…GSSS) and 454-467 (SPTS…TSPA).

As to quaternary structure, interacts with nlk.2.

It localises to the nucleus. Negatively regulates Wnt/beta-catenin signaling during development. This Xenopus laevis (African clawed frog) protein is HMG box-containing protein 4 (hmgxb4).